The sequence spans 128 residues: Large ribosomal subunit protein bL12 (128 aa).

Belongs to the bacterial ribosomal protein bL12 family. In terms of assembly, homodimer. Part of the ribosomal stalk of the 50S ribosomal subunit. Forms a multimeric L10(L12)X complex, where L10 forms an elongated spine to which 2 to 4 L12 dimers bind in a sequential fashion. Binds GTP-bound translation factors.

In terms of biological role, forms part of the ribosomal stalk which helps the ribosome interact with GTP-bound translation factors. Is thus essential for accurate translation. This is Large ribosomal subunit protein bL12 from Synechococcus sp. (strain ATCC 27144 / PCC 6301 / SAUG 1402/1) (Anacystis nidulans).